The primary structure comprises 358 residues: NADH-quinone oxidoreductase subunit H (358 aa).

Helical transmembrane passes span 20–40 (ITVG…IPLI), 95–115 (ALFY…WAVI), 128–148 (IGLL…IIAG), 168–188 (ISYE…SGSM), 206–226 (VFSW…ISAV), 253–273 (GFAF…IAAL), 295–315 (TPSA…YLWI), and 334–354 (VLIP…ISPL).

It belongs to the complex I subunit 1 family. As to quaternary structure, NDH-1 is composed of 14 different subunits. Subunits NuoA, H, J, K, L, M, N constitute the membrane sector of the complex.

The protein localises to the cell inner membrane. It catalyses the reaction a quinone + NADH + 5 H(+)(in) = a quinol + NAD(+) + 4 H(+)(out). Its function is as follows. NDH-1 shuttles electrons from NADH, via FMN and iron-sulfur (Fe-S) centers, to quinones in the respiratory chain. The immediate electron acceptor for the enzyme in this species is believed to be ubiquinone. Couples the redox reaction to proton translocation (for every two electrons transferred, four hydrogen ions are translocated across the cytoplasmic membrane), and thus conserves the redox energy in a proton gradient. This subunit may bind ubiquinone. The polypeptide is NADH-quinone oxidoreductase subunit H (Neisseria gonorrhoeae (strain ATCC 700825 / FA 1090)).